The chain runs to 751 residues: Semaphorin-3C (751 aa).

An N-terminal signal peptide occupies residues 1–21; sequence MAVLALHAVFGIFIYFSSVKG. In terms of domain architecture, Sema spans 28–511; the sequence is RVFLTFNELQ…SEEGVTQVPL (484 aa). Asparagine 81 is a glycosylation site (N-linked (GlcNAc...) asparagine). Cysteine 101 and cysteine 112 are joined by a disulfide. Asparagine 123 carries N-linked (GlcNAc...) asparagine glycosylation. Intrachain disulfides connect cysteine 130/cysteine 139, cysteine 266/cysteine 378, and cysteine 290/cysteine 338. Asparagine 268 is a glycosylation site (N-linked (GlcNAc...) asparagine). N-linked (GlcNAc...) asparagine glycosylation is present at asparagine 465. Cysteines 514 and 532 form a disulfide. An Ig-like C2-type domain is found at 571 to 655; that stretch reads AYRNAAETVQ…TENNFKQTLA (85 aa). N-linked (GlcNAc...) asparagine glycans are attached at residues asparagine 585 and asparagine 586. Cysteine 643 and cysteine 709 are disulfide-bonded. Residues 712 to 731 show a composition bias toward basic and acidic residues; that stretch reads SRQQGQRREEPQKMRGDYSK. A disordered region spans residues 712-751; it reads SRQQGQRREEPQKMRGDYSKLKALINSRKSRNRRNQLPAS.

This sequence belongs to the semaphorin family. Collapsin-1, -2, -3, and -5 bind to overlapping but distinct axon tracts.

The protein localises to the secreted. Induces the collapse and paralysis of neuronal growth cones. Could potentially act as repulsive cues toward specific neuronal populations. Binds to neuropilin. The polypeptide is Semaphorin-3C (SEMA3C) (Gallus gallus (Chicken)).